Consider the following 436-residue polypeptide: Gamma-glutamyl phosphate reductase (436 aa).

The protein belongs to the gamma-glutamyl phosphate reductase family.

It is found in the cytoplasm. The catalysed reaction is L-glutamate 5-semialdehyde + phosphate + NADP(+) = L-glutamyl 5-phosphate + NADPH + H(+). It functions in the pathway amino-acid biosynthesis; L-proline biosynthesis; L-glutamate 5-semialdehyde from L-glutamate: step 2/2. In terms of biological role, catalyzes the NADPH-dependent reduction of L-glutamate 5-phosphate into L-glutamate 5-semialdehyde and phosphate. The product spontaneously undergoes cyclization to form 1-pyrroline-5-carboxylate. This is Gamma-glutamyl phosphate reductase from Prochlorococcus marinus (strain MIT 9312).